Reading from the N-terminus, the 538-residue chain is Bifunctional purine biosynthesis protein PurH (538 aa).

Positions 6–158 constitute an MGS-like domain; it reads KHIPAPDLHR…KNHAYVATVV (153 aa).

This sequence belongs to the PurH family.

It catalyses the reaction (6R)-10-formyltetrahydrofolate + 5-amino-1-(5-phospho-beta-D-ribosyl)imidazole-4-carboxamide = 5-formamido-1-(5-phospho-D-ribosyl)imidazole-4-carboxamide + (6S)-5,6,7,8-tetrahydrofolate. The enzyme catalyses IMP + H2O = 5-formamido-1-(5-phospho-D-ribosyl)imidazole-4-carboxamide. The protein operates within purine metabolism; IMP biosynthesis via de novo pathway; 5-formamido-1-(5-phospho-D-ribosyl)imidazole-4-carboxamide from 5-amino-1-(5-phospho-D-ribosyl)imidazole-4-carboxamide (10-formyl THF route): step 1/1. It participates in purine metabolism; IMP biosynthesis via de novo pathway; IMP from 5-formamido-1-(5-phospho-D-ribosyl)imidazole-4-carboxamide: step 1/1. This Brucella anthropi (strain ATCC 49188 / DSM 6882 / CCUG 24695 / JCM 21032 / LMG 3331 / NBRC 15819 / NCTC 12168 / Alc 37) (Ochrobactrum anthropi) protein is Bifunctional purine biosynthesis protein PurH.